Consider the following 338-residue polypeptide: MIHKNWAELIKPTQLEIKPGADSSRVATVVAEPLERGFGLTLGNALRRVLLSSLQGAAITSVQIDNVLHEFSSVPGVREDVTDIVLNLKGVTLKMDVDAPKRLTLSAKGPGEVKAGDIQESAGITILNRDHVICHLDEGAELHMELAVANGKGYVAADKNRPEDAPIGLIPIDAIFSPVKRVSYEVTPTREGQVLDYDKLTMKVETDGSLTPEDAVAYAARIIQDQLSVFVNFDEPETATRSDAEDGLEFDPRLLKKVDELELSVRSANCLKNDNIVYIGDLIQKTEAEMLRTPNFGRKSLNEIKEVLSGMGLHLGMDVVDWPPENIEDLAKRFDDQF.

The interval 1–234 (MIHKNWAELI…DQLSVFVNFD (234 aa)) is alpha N-terminal domain (alpha-NTD). The alpha C-terminal domain (alpha-CTD) stretch occupies residues 250–338 (FDPRLLKKVD…DLAKRFDDQF (89 aa)).

The protein belongs to the RNA polymerase alpha chain family. In terms of assembly, homodimer. The RNAP catalytic core consists of 2 alpha, 1 beta, 1 beta' and 1 omega subunit. When a sigma factor is associated with the core the holoenzyme is formed, which can initiate transcription.

The catalysed reaction is RNA(n) + a ribonucleoside 5'-triphosphate = RNA(n+1) + diphosphate. DNA-dependent RNA polymerase catalyzes the transcription of DNA into RNA using the four ribonucleoside triphosphates as substrates. In Paracoccus denitrificans (strain Pd 1222), this protein is DNA-directed RNA polymerase subunit alpha.